Here is a 163-residue protein sequence, read N- to C-terminus: Small ribosomal subunit protein uS5 (163 aa).

The region spanning Leu-8 to Val-71 is the S5 DRBM domain.

This sequence belongs to the universal ribosomal protein uS5 family. In terms of assembly, part of the 30S ribosomal subunit. Contacts proteins S4 and S8.

Functionally, with S4 and S12 plays an important role in translational accuracy. Located at the back of the 30S subunit body where it stabilizes the conformation of the head with respect to the body. The protein is Small ribosomal subunit protein uS5 of Maridesulfovibrio salexigens (strain ATCC 14822 / DSM 2638 / NCIMB 8403 / VKM B-1763) (Desulfovibrio salexigens).